A 450-amino-acid polypeptide reads, in one-letter code: TNF receptor-associated factor family protein DDB_G0273433/DDB_G0273509 (450 aa).

The segment at 26–73 adopts an RING-type; degenerate zinc-finger fold; sequence CQICFNSVIDFKKETLSFDVLQCRNGHISCHECWNRQLSIKQECPSCK. TRAF-type zinc fingers lie at residues 129-185 and 186-243; these read HHLK…KKLN and KHIE…SQLS. Positions 257 to 297 form a coiled coil; that stretch reads QNVMDLHKLQLDECNQDYRKLEKQNRDLEKRLFYLESTVNS. Positions 319 to 439 constitute an MATH domain; that stretch reads VYKGKWVINN…NNSLTISISI (121 aa).

It belongs to the TNF receptor-associated factor family. A subfamily.

The protein resides in the cytoplasm. Its function is as follows. Probable adapter protein and signal transducer that links members of the tumor necrosis factor receptor family to different signaling pathways by association with the receptor cytoplasmic domain and kinases. This is TNF receptor-associated factor family protein DDB_G0273433/DDB_G0273509 from Dictyostelium discoideum (Social amoeba).